The following is a 275-amino-acid chain: uncharacterized protein (275 aa).

NAD(+) contacts are provided by residues 20 to 22 (RAQ), 41 to 42 (DI), 80 to 81 (DI), and asparagine 107. Serine 160 provides a ligand contact to substrate. Tyrosine 173 acts as the Proton acceptor in catalysis. NAD(+) contacts are provided by residues lysine 177 and 206–208 (VDT).

Belongs to the short-chain dehydrogenases/reductases (SDR) family.

This is an uncharacterized protein from Mycobacterium tuberculosis (strain CDC 1551 / Oshkosh).